The chain runs to 403 residues: S-adenosylmethionine synthase (403 aa).

ATP is bound at residue His16. A Mg(2+)-binding site is contributed by Asp18. Glu44 is a binding site for K(+). Positions 57 and 100 each coordinate L-methionine. A flexible loop region spans residues Gln100 to Arg110. Positions Gln106–Leu126 are disordered. ATP is bound by residues Asp176 to Lys178, Lys248 to Phe249, Asp257, Arg263 to Lys264, Ala280, and Lys284. Asp257 is an L-methionine binding site. Lys288 provides a ligand contact to L-methionine.

This sequence belongs to the AdoMet synthase family. In terms of assembly, homotetramer; dimer of dimers. The cofactor is Mg(2+). It depends on K(+) as a cofactor.

Its subcellular location is the cytoplasm. The catalysed reaction is L-methionine + ATP + H2O = S-adenosyl-L-methionine + phosphate + diphosphate. It participates in amino-acid biosynthesis; S-adenosyl-L-methionine biosynthesis; S-adenosyl-L-methionine from L-methionine: step 1/1. In terms of biological role, catalyzes the formation of S-adenosylmethionine (AdoMet) from methionine and ATP. The overall synthetic reaction is composed of two sequential steps, AdoMet formation and the subsequent tripolyphosphate hydrolysis which occurs prior to release of AdoMet from the enzyme. This is S-adenosylmethionine synthase from Clavibacter michiganensis subsp. michiganensis (strain NCPPB 382).